The chain runs to 96 residues: Co-chaperonin GroES (96 aa).

It belongs to the GroES chaperonin family. Heptamer of 7 subunits arranged in a ring. Interacts with the chaperonin GroEL.

It is found in the cytoplasm. In terms of biological role, together with the chaperonin GroEL, plays an essential role in assisting protein folding. The GroEL-GroES system forms a nano-cage that allows encapsulation of the non-native substrate proteins and provides a physical environment optimized to promote and accelerate protein folding. GroES binds to the apical surface of the GroEL ring, thereby capping the opening of the GroEL channel. The protein is Co-chaperonin GroES of Methylobacillus flagellatus (strain ATCC 51484 / DSM 6875 / VKM B-1610 / KT).